Reading from the N-terminus, the 312-residue chain is Porphobilinogen deaminase (312 aa).

The residue at position 241 (Cys241) is an S-(dipyrrolylmethanemethyl)cysteine.

The protein belongs to the HMBS family. In terms of assembly, monomer. Requires dipyrromethane as cofactor.

The catalysed reaction is 4 porphobilinogen + H2O = hydroxymethylbilane + 4 NH4(+). The protein operates within porphyrin-containing compound metabolism; protoporphyrin-IX biosynthesis; coproporphyrinogen-III from 5-aminolevulinate: step 2/4. Its pathway is porphyrin-containing compound metabolism; chlorophyll biosynthesis. Tetrapolymerization of the monopyrrole PBG into the hydroxymethylbilane pre-uroporphyrinogen in several discrete steps. The chain is Porphobilinogen deaminase from Chlorobaculum tepidum (strain ATCC 49652 / DSM 12025 / NBRC 103806 / TLS) (Chlorobium tepidum).